We begin with the raw amino-acid sequence, 163 residues long: RxLR effector protein PITG_13625 (163 aa).

An N-terminal signal peptide occupies residues 1–23 (MKVSKAIVALAALCMALLAPAAG). The RxLR-dEER motif lies at 37–52 (RHLRQESAELATTPEE).

Belongs to the RxLR effector family.

The protein resides in the secreted. It localises to the host cell membrane. Functionally, effector that enhances P.infestans colonization of Nicotiana benthamiana leaves. The protein is RxLR effector protein PITG_13625 of Phytophthora infestans (strain T30-4) (Potato late blight agent).